The sequence spans 528 residues: Transcription factor cghF (528 aa).

The segment at 232-283 (TPPNHATSSTPTSTRTPPTYHPHGPRPKSPLSSTPSPRTESTKSAAPSRDLA) is disordered. Positions 238 to 249 (TSSTPTSTRTPP) are enriched in low complexity. Positions 261-276 (PLSSTPSPRTESTKSA) are enriched in polar residues.

It localises to the nucleus. Its function is as follows. Transcription factor that regulates the expression of the gene cluster that mediates the biosynthesis of the tetramic acid Sch210972, a potential anti-HIV fungal natural product that contains a decalin core. The chain is Transcription factor cghF from Chaetomium globosum (strain ATCC 6205 / CBS 148.51 / DSM 1962 / NBRC 6347 / NRRL 1970) (Soil fungus).